Reading from the N-terminus, the 233-residue chain is Peroxisomal membrane protein 11-5 (233 aa).

Topologically, residues 1 to 92 are cytoplasmic; that stretch reads MSSLESARAD…PLILLGKSKN (92 aa). A helical membrane pass occupies residues 93-113; that stretch reads ALLSTFLFLDQIVWAGRTGIY. Over 114–206 the chain is Lumenal; sequence KNKERAEFLS…LLQLAPKKVT (93 aa). The helical transmembrane segment at 207 to 226 threads the bilayer; the sequence is PRVTGAFGFASSLIACYQLL.

The protein belongs to the peroxin-11 family. In terms of tissue distribution, expressed in seedlings, roots, shoots, leaf sheaths, flag leaf, panicles, spikelets, and endosperm.

The protein localises to the peroxisome membrane. Involved in peroxisomal proliferation. The chain is Peroxisomal membrane protein 11-5 (PEX11-5) from Oryza sativa subsp. japonica (Rice).